A 352-amino-acid polypeptide reads, in one-letter code: Ion-translocating oxidoreductase complex subunit D (352 aa).

4 helical membrane passes run 20 to 40 (IMLLVLLAAVPGIAAQLWFFG), 42 to 62 (GTLVQILLASVSALLAEALVL), 89 to 109 (IPPLAPWWMVVLGTVFAVIIA), and 123 to 143 (PAMIGYVVLLISFPVQMTSWL). Threonine 187 bears the FMN phosphoryl threonine mark. The next 5 helical transmembrane spans lie at 214–234 (ILAGAGWQWVNLAWLAGGVWL), 242–262 (WHIPLSFLVTLALCATLGWLF), 267–287 (LAAPQIHLLSGATMLGAFFIL), 301–321 (LIFGALAGLLVWMIRSFGGYP), and 322–342 (DGVAFAVLLANITVPLIDYYT).

Belongs to the NqrB/RnfD family. In terms of assembly, the complex is composed of six subunits: RsxA, RsxB, RsxC, RsxD, RsxE and RsxG. It depends on FMN as a cofactor.

It localises to the cell inner membrane. In terms of biological role, part of a membrane-bound complex that couples electron transfer with translocation of ions across the membrane. Required to maintain the reduced state of SoxR. This chain is Ion-translocating oxidoreductase complex subunit D, found in Escherichia coli O81 (strain ED1a).